A 310-amino-acid chain; its full sequence is 4-hydroxyproline 2-epimerase (310 aa).

The active-site Proton acceptor is Cys88. Substrate-binding positions include 89–90, His208, and Asp232; that span reads GH. Catalysis depends on Cys236, which acts as the Proton donor. A substrate-binding site is contributed by 237–238; sequence GT.

Belongs to the proline racemase family.

The enzyme catalyses trans-4-hydroxy-L-proline = cis-4-hydroxy-D-proline. Functionally, catalyzes the epimerization of trans-4-hydroxy-L-proline (t4LHyp) to cis-4-hydroxy-D-proline (c4DHyp). Is likely involved in a degradation pathway that converts t4LHyp to alpha-ketoglutarate. Displays no proline racemase activity. This is 4-hydroxyproline 2-epimerase from Acinetobacter baumannii (strain ATCC 17978 / DSM 105126 / CIP 53.77 / LMG 1025 / NCDC KC755 / 5377).